A 127-amino-acid chain; its full sequence is Large ribosomal subunit protein bL12 (127 aa).

Belongs to the bacterial ribosomal protein bL12 family. In terms of assembly, homodimer. Part of the ribosomal stalk of the 50S ribosomal subunit. Forms a multimeric L10(L12)X complex, where L10 forms an elongated spine to which 2 to 4 L12 dimers bind in a sequential fashion. Binds GTP-bound translation factors.

In terms of biological role, forms part of the ribosomal stalk which helps the ribosome interact with GTP-bound translation factors. Is thus essential for accurate translation. This Acidiphilium cryptum (strain JF-5) protein is Large ribosomal subunit protein bL12.